Reading from the N-terminus, the 144-residue chain is Large ribosomal subunit protein uL11 (144 aa).

This sequence belongs to the universal ribosomal protein uL11 family. In terms of assembly, part of the ribosomal stalk of the 50S ribosomal subunit. Interacts with L10 and the large rRNA to form the base of the stalk. L10 forms an elongated spine to which L12 dimers bind in a sequential fashion forming a multimeric L10(L12)X complex. One or more lysine residues are methylated.

Its function is as follows. Forms part of the ribosomal stalk which helps the ribosome interact with GTP-bound translation factors. The polypeptide is Large ribosomal subunit protein uL11 (Acidiphilium cryptum (strain JF-5)).